Here is a 199-residue protein sequence, read N- to C-terminus: Imidazole glycerol phosphate synthase subunit HisH (199 aa).

One can recognise a Glutamine amidotransferase type-1 domain in the interval 2–199 (RAVIIDYGVG…LTNVYRWLRK (198 aa)). The active-site Nucleophile is the cysteine 76. Residues histidine 178 and glutamate 180 contribute to the active site.

Heterodimer of HisH and HisF.

Its subcellular location is the cytoplasm. The catalysed reaction is 5-[(5-phospho-1-deoxy-D-ribulos-1-ylimino)methylamino]-1-(5-phospho-beta-D-ribosyl)imidazole-4-carboxamide + L-glutamine = D-erythro-1-(imidazol-4-yl)glycerol 3-phosphate + 5-amino-1-(5-phospho-beta-D-ribosyl)imidazole-4-carboxamide + L-glutamate + H(+). It catalyses the reaction L-glutamine + H2O = L-glutamate + NH4(+). Its pathway is amino-acid biosynthesis; L-histidine biosynthesis; L-histidine from 5-phospho-alpha-D-ribose 1-diphosphate: step 5/9. IGPS catalyzes the conversion of PRFAR and glutamine to IGP, AICAR and glutamate. The HisH subunit catalyzes the hydrolysis of glutamine to glutamate and ammonia as part of the synthesis of IGP and AICAR. The resulting ammonia molecule is channeled to the active site of HisF. In Sulfolobus acidocaldarius (strain ATCC 33909 / DSM 639 / JCM 8929 / NBRC 15157 / NCIMB 11770), this protein is Imidazole glycerol phosphate synthase subunit HisH.